A 492-amino-acid chain; its full sequence is N-succinylglutamate 5-semialdehyde dehydrogenase (492 aa).

Residue 220-225 (GSANTG) participates in NAD(+) binding. Active-site residues include Glu243 and Cys277.

This sequence belongs to the aldehyde dehydrogenase family. AstD subfamily.

The catalysed reaction is N-succinyl-L-glutamate 5-semialdehyde + NAD(+) + H2O = N-succinyl-L-glutamate + NADH + 2 H(+). Its pathway is amino-acid degradation; L-arginine degradation via AST pathway; L-glutamate and succinate from L-arginine: step 4/5. Its function is as follows. Catalyzes the NAD-dependent reduction of succinylglutamate semialdehyde into succinylglutamate. This Escherichia coli O157:H7 protein is N-succinylglutamate 5-semialdehyde dehydrogenase.